A 279-amino-acid polypeptide reads, in one-letter code: Lactose operon transcription activator (279 aa).

The region spanning 174 to 272 is the HTH araC/xylS-type domain; that stretch reads QHAVDFINTN…EISASEYRHH (99 aa). 2 consecutive DNA-binding regions (H-T-H motif) follow at residues 191–212 and 239–262; these read EDVAKSVNITRSHLYKLFKKNL and ISDISRQVGYKDPLLFSKNFTKHF.

In terms of biological role, transcriptional regulator of the lacPH genes for lactose utilization. The protein is Lactose operon transcription activator (lacR) of Staphylococcus xylosus.